We begin with the raw amino-acid sequence, 188 residues long: Josephin-2 (188 aa).

The 178-residue stretch at 11–188 folds into the Josephin domain; it reads PPTVYHERQR…EEKGSWLRTD (178 aa). Cys-24 serves as the catalytic Nucleophile. Residue His-125 is the Proton acceptor of the active site.

It is found in the cytoplasm. Its subcellular location is the cytosol. The enzyme catalyses Thiol-dependent hydrolysis of ester, thioester, amide, peptide and isopeptide bonds formed by the C-terminal Gly of ubiquitin (a 76-residue protein attached to proteins as an intracellular targeting signal).. Cleaves 'Lys-63'-linked poly-ubiquitin chains, and with lesser efficiency 'Lys-48'-linked poly-ubiquitin chains (in vitro). May act as a deubiquitinating enzyme. This Homo sapiens (Human) protein is Josephin-2 (JOSD2).